Reading from the N-terminus, the 550-residue chain is Hydroxylamine reductase (550 aa).

[2Fe-2S] cluster is bound by residues cysteine 3, cysteine 6, cysteine 18, and cysteine 25. Hybrid [4Fe-2O-2S] cluster is bound by residues histidine 249, glutamate 273, cysteine 317, cysteine 405, cysteine 433, cysteine 458, glutamate 492, and lysine 494. Cysteine 405 carries the cysteine persulfide modification.

It belongs to the HCP family. It depends on [2Fe-2S] cluster as a cofactor. Hybrid [4Fe-2O-2S] cluster is required as a cofactor.

It is found in the cytoplasm. The catalysed reaction is A + NH4(+) + H2O = hydroxylamine + AH2 + H(+). Catalyzes the reduction of hydroxylamine to form NH(3) and H(2)O. The chain is Hydroxylamine reductase from Salmonella dublin (strain CT_02021853).